The chain runs to 265 residues: Uronate dehydrogenase (265 aa).

Residues 12–13 (QL), 32–34 (DLS), 49–50 (DL), and 69–73 (LGGIS) contribute to the NAD(+) site. Substrate contacts are provided by residues Ser-73 and 109 to 111 (SNH). The active-site Proton acceptor is the Tyr-134. Lys-138 is an NAD(+) binding site. Ser-163 contacts substrate. NAD(+) is bound at residue Cys-164. Position 172 (Arg-172) interacts with substrate.

The protein belongs to the NAD(P)-dependent epimerase/dehydratase family. As to quaternary structure, homohexamer.

It carries out the reaction beta-D-galacturonate + NAD(+) = D-galactaro-1,5-lactone + NADH + H(+). The enzyme catalyses beta-D-glucuronate + NAD(+) = D-glucaro-1,5-lactone + NADH + H(+). It participates in carbohydrate acid metabolism; D-galacturonate degradation via prokaryotic oxidative pathway. In terms of biological role, catalyzes the oxidation of D-galacturonate and D-glucuronate to galactarate and D-glucarate, respectively. In fact, in water solution the substrate D-galacturonate is predominantly in pyranosic form whose beta anomer is converted by the enzyme to D-galactaro-1,5-lactone; in solution, this reaction product rearranges to the more stable D-galactaro-1,4-lactone. Makes part of the oxidative degradation pathway of D-galacturonate, which allows A.tumefaciens to utilize D-galacturonate as a sole carbon source. Cannot use NADP(+) instead of NAD(+) as cosubstrate. Is not active on D-galactose, D-glucose, D-galactonate and D-gluconate. The sequence is that of Uronate dehydrogenase (udh) from Agrobacterium fabrum (strain C58 / ATCC 33970) (Agrobacterium tumefaciens (strain C58)).